The primary structure comprises 349 residues: 4-hydroxy-3-methylbut-2-en-1-yl diphosphate synthase (flavodoxin) (349 aa).

Residues Cys264, Cys267, Cys299, and Glu306 each contribute to the [4Fe-4S] cluster site.

It belongs to the IspG family. [4Fe-4S] cluster serves as cofactor.

The enzyme catalyses (2E)-4-hydroxy-3-methylbut-2-enyl diphosphate + oxidized [flavodoxin] + H2O + 2 H(+) = 2-C-methyl-D-erythritol 2,4-cyclic diphosphate + reduced [flavodoxin]. It functions in the pathway isoprenoid biosynthesis; isopentenyl diphosphate biosynthesis via DXP pathway; isopentenyl diphosphate from 1-deoxy-D-xylulose 5-phosphate: step 5/6. Its function is as follows. Converts 2C-methyl-D-erythritol 2,4-cyclodiphosphate (ME-2,4cPP) into 1-hydroxy-2-methyl-2-(E)-butenyl 4-diphosphate. This Clostridium tetani (strain Massachusetts / E88) protein is 4-hydroxy-3-methylbut-2-en-1-yl diphosphate synthase (flavodoxin).